A 449-amino-acid chain; its full sequence is MVSAISIVAIFALEGFVTTYSDGTKDLVFVQTLWRHGDRSPTKTFKTDPFQEDAWQFGGGGWGQLSPAGMKQHLNLGKMLRNRYVTNYNFLPNKYNAKQIYVRSTDVNRTIISAMSNLLGQYGQNDNSSTPGLDYPDVDGWPAGYVPIAVHTVDDDTDHLGNMESTCPFKDQVWELAKTSDEVKSFVNSADVQAVLGNLTNYCGQPVDIDNLWIITNALYIEQIYYNATLRTKNNWFTDAFYAKADAINDQVQLFQNGIFKTVPNIVNGHDVGVLTRKVRGGPILNDMVMHINLKLMCQGQTTPNCTWINNLKNYIYSAHDTTIYAFFSALLIEEYAVKPSGGYPLYSAAVLLELYIDSVDKKPYFKMVYHEQDGSGFKDVTMGIQGCPQNSSYCDLDILRNFANTIKPDQPIDQWCLTDLNKSSSFATVSMLFIAAILAINNNFLGLF.

The first 19 residues, 1–19 (MVSAISIVAIFALEGFVTT), serve as a signal peptide directing secretion. Over 20 to 428 (YSDGTKDLVF…TDLNKSSSFA (409 aa)) the chain is Extracellular. Residue His36 is the Nucleophile of the active site. Asp321 functions as the Proton donor in the catalytic mechanism. A helical transmembrane segment spans residues 429 to 449 (TVSMLFIAAILAINNNFLGLF).

This sequence belongs to the histidine acid phosphatase family. In terms of assembly, homodimer. The N-terminus is blocked. In terms of tissue distribution, expressed in the intestine, specifically on the edge of the gut lumen, in the 14 posterior cells of the intestine.

Its subcellular location is the membrane. The enzyme catalyses a phosphate monoester + H2O = an alcohol + phosphate. Acid phosphatase required for normal growth and development. Specifically required for normal gut differentiation. The chain is Intestinal acid phosphatase from Caenorhabditis elegans.